Reading from the N-terminus, the 1387-residue chain is Kinesin-like protein KIF15 (1387 aa).

The segment at 1-23 (MAPGCKSELRNVTNSHSNQPSNE) is disordered. The segment covering 10 to 22 (RNVTNSHSNQPSN) has biased composition (polar residues). One can recognise a Kinesin motor domain in the interval 26–363 (AIKVFVRIRP…LNFAQRAKLI (338 aa)). ATP is bound at residue 109-116 (GQTGSGKT). Positions 368-1132 (VVNEDTQGNV…LKMRQLEHVM (765 aa)) form a coiled coil. Residue S568 is modified to Phosphoserine. K1009 is modified (N6-acetyllysine). 2 positions are modified to phosphoserine: S1141 and S1169.

Belongs to the TRAFAC class myosin-kinesin ATPase superfamily. Kinesin family. KLP2 subfamily. Interacts with MKI67 and TPX2. In terms of tissue distribution, expressed in brain (neurons in the external germinal layer of the cerebellum and in ventricular zones) (at protein level). Expressed in spleen and testis.

The protein localises to the cytoplasm. The protein resides in the cytoskeleton. Its subcellular location is the spindle. Functionally, plus-end directed kinesin-like motor enzyme involved in mitotic spindle assembly. The protein is Kinesin-like protein KIF15 (Kif15) of Mus musculus (Mouse).